We begin with the raw amino-acid sequence, 439 residues long: Histidine--tRNA ligase (439 aa).

Belongs to the class-II aminoacyl-tRNA synthetase family. Homodimer.

It is found in the cytoplasm. It carries out the reaction tRNA(His) + L-histidine + ATP = L-histidyl-tRNA(His) + AMP + diphosphate + H(+). In Leptospira interrogans serogroup Icterohaemorrhagiae serovar copenhageni (strain Fiocruz L1-130), this protein is Histidine--tRNA ligase.